A 538-amino-acid polypeptide reads, in one-letter code: Phosphoenolpyruvate carboxykinase (ATP) (538 aa).

Substrate is bound by residues Arg64, Tyr205, and Lys211. ATP-binding positions include Lys211, His230, and 246 to 254; that span reads GLSGTGKTT. Residues Lys211 and His230 each coordinate Mn(2+). Asp267 provides a ligand contact to Mn(2+). Residues Glu295, Arg331, 447–448, and Thr453 each bind ATP; that span reads RI. Arg331 is a substrate binding site.

This sequence belongs to the phosphoenolpyruvate carboxykinase (ATP) family. Monomer. The cofactor is Mn(2+).

It is found in the cytoplasm. The enzyme catalyses oxaloacetate + ATP = phosphoenolpyruvate + ADP + CO2. The protein operates within carbohydrate biosynthesis; gluconeogenesis. Involved in the gluconeogenesis. Catalyzes the conversion of oxaloacetate (OAA) to phosphoenolpyruvate (PEP) through direct phosphoryl transfer between the nucleoside triphosphate and OAA. This Pasteurella multocida (strain Pm70) protein is Phosphoenolpyruvate carboxykinase (ATP).